A 707-amino-acid polypeptide reads, in one-letter code: Matrix metalloproteinase-9 (707 aa).

The first 19 residues, 1-19 (MSPRQPLVLALLVLGCCSA), serve as a signal peptide directing secretion. A propeptide spans 20-106 (APRRRQPTLV…PRCGVPDVGK (87 aa)) (activation peptide). The N-linked (GlcNAc...) asparagine glycan is linked to Asn88. The Cysteine switch signature appears at 97–104 (PRCGVPDV). A Zn(2+)-binding site is contributed by Cys99. 2 N-linked (GlcNAc...) asparagine glycosylation sites follow: Asn120 and Asn127. Ca(2+)-binding residues include Asp131 and Asp165. Positions 175 and 177 each coordinate Zn(2+). Positions 182, 183, 185, and 187 each coordinate Ca(2+). His190 contacts Zn(2+). Ca(2+)-binding residues include Gly197, Gln199, and Asp201. His203 lines the Zn(2+) pocket. Positions 205, 206, and 208 each coordinate Ca(2+). Fibronectin type-II domains are found at residues 225 to 273 (ADGA…FCPS), 283 to 331 (ADGK…FCPT), and 342 to 390 (SAGE…FCPD). Disulfide bonds link Cys230-Cys256, Cys244-Cys271, Cys288-Cys314, Cys302-Cys329, Cys347-Cys373, and Cys361-Cys388. Residue His401 coordinates Zn(2+). Residue Glu402 is part of the active site. His405 and His411 together coordinate Zn(2+). The segment at 437-508 (RGIQHLYGPN…ASPSAAPTAS (72 aa)) is disordered. Residues 446 to 467 (NPNPQPPATTTPEPQPTAPPTA) are compositionally biased toward pro residues. Residues 481-493 (PTTSPTGAPSAGP) show a composition bias toward low complexity. Cys516 and Cys704 form a disulfide bridge. Hemopexin repeat units follow at residues 518-563 (VNVF…WPAL), 564-608 (PAKL…GLGP), 610-657 (VPHV…FPGV), and 658-704 (PLNT…ILHC).

This sequence belongs to the peptidase M10A family. As to quaternary structure, exists as monomer or homodimer; disulfide-linked. Also exists as heterodimer with LCN2. Macrophages and transformed cell lines produce only the monomeric form. Interacts with ECM1. Zn(2+) is required as a cofactor. Requires Ca(2+) as cofactor. N- and O-glycosylated. Osteoclasts.

The protein resides in the secreted. It localises to the extracellular space. It is found in the extracellular matrix. It catalyses the reaction Cleavage of gelatin types I and V and collagen types IV and V.. Its function is as follows. Matrix metalloproteinase that plays an essential role in local proteolysis of the extracellular matrix and in leukocyte migration. Could play a role in bone osteoclastic resorption. Cleaves KiSS1 at a Gly-|-Leu bond. Cleaves NINJ1 to generate the Secreted ninjurin-1 form. Cleaves type IV and type V collagen into large C-terminal three quarter fragments and shorter N-terminal one quarter fragments. Degrades fibronectin but not laminin or Pz-peptide. This Oryctolagus cuniculus (Rabbit) protein is Matrix metalloproteinase-9.